The sequence spans 82 residues: Apovitellenin-1 (82 aa).

Belongs to the apovitellenin family. In terms of assembly, monomer. As to expression, found in egg yolk and in plasma.

Protein component of the very low density lipoprotein (VLDL) of egg-laying females. Potent lipoprotein lipase inhibitor, preventing the loss of triglycerides from VLDL on their way from the liver to the growing oocytes. The chain is Apovitellenin-1 from Meleagris gallopavo (Wild turkey).